The primary structure comprises 359 residues: MKRVIAGAFAVWLVGWAGGFGTAIAASEPAYPWAPGPPPSPSPVGDASTAKVVYALGGARMPGIPWYEYTNQAGSQYFPNAKHDLIDYPAGAAFSWWPTMLLPPGSHQDNMTVGVAVKDGTNSLDNAIHHGTDPAAAVGLSQGSLVLDQEQARLANDPTAPAPDKLQFTTFGDPTGRHAFGASFLARIFPPGSHIPIPFIEYTMPQQVDSQYDTNHVVTAYDGFSDFPDRPDNLLAVANAAIGAAIAHTPIGFTGPGDVPPQNIRTTVNSRGATTTTYLVPVNHLPLTLPLRYLGMSDAEVDQIDSVLQPQIDAAYARNDNWFTRPVSVDPVRGLDPLTAPGSIVEGARGLLGSPAFGG.

The helical transmembrane segment at 4-24 (VIAGAFAVWLVGWAGGFGTAI) threads the bilayer. Residues 79-316 (PNAKHDLIDY…VLQPQIDAAY (238 aa)) form the PE-PPE domain.

Belongs to the mycobacterial PPE family.

The protein resides in the cell inner membrane. With respect to regulation, activity is probably potentiated by the DAT/PAT transporter MmpL10. Inhibited by the lipase inhibitor tetrahydrolipstatin (THL). Functionally, involved in the final steps of polyacyltrehalose (PAT) biosynthesis. Catalyzes the transfer of three mycolipenoyl groups onto diacyltrehalose (DAT) to form PAT. The sequence is that of Diacyltrehalose acyltransferase Chp2 from Mycobacterium tuberculosis (strain ATCC 25618 / H37Rv).